We begin with the raw amino-acid sequence, 397 residues long: F-box protein At4g11590 (397 aa).

The region spanning 24-70 is the F-box domain; sequence EKNFNDVPLDVAIEIFMRLPVKSVARFLLLSKFWAEIIRSRHFITSF.

Part of a SCF (ASK-cullin-F-box) protein ligase complex. Interacts with ASK16.

The protein resides in the nucleus. The protein operates within protein modification; protein ubiquitination. In terms of biological role, component of SCF(ASK-cullin-F-box) E3 ubiquitin ligase complexes, which may mediate the ubiquitination and subsequent proteasomal degradation of target proteins. The polypeptide is F-box protein At4g11590 (Arabidopsis thaliana (Mouse-ear cress)).